The sequence spans 236 residues: Mitochondrial-abundant heat soluble protein (236 aa).

The N-terminal 73 residues, 1-73, are a transit peptide targeting the mitochondrion; the sequence is MSRYLLRDVQ…AARAGVVLRG (73 aa). Disordered stretches follow at residues 102 to 135 and 165 to 209; these read RIHS…NEAA and RSNG…EIVA. 2 stretches are compositionally biased toward polar residues: residues 105–126 and 192–202; these read SQSS…NSPQ and APDSSKNTKSV. An MAHS motif motif is present at residues 126–143; that stretch reads QPEGKANEAAERAKQFMN.

Its subcellular location is the mitochondrion. Mitochondrial heat soluble protein acting as a molecular shield in water-deficient condition. This chain is Mitochondrial-abundant heat soluble protein, found in Ramazzottius varieornatus (Water bear).